A 692-amino-acid polypeptide reads, in one-letter code: Paramyosin (692 aa).

The interval 1-15 (MNKKRDSELAKLRKL) is nonhelical region. Residues 16–692 (LEDVHIESEE…DHRVKELLLQ (677 aa)) are a coiled coil. The tract at residues 26–57 (TAHHLRQKHQAAIQEMQDQLDQLQKAKNKSDK) is disordered.

It belongs to the paramyosin family. As to quaternary structure, homodimer.

The protein localises to the cytoplasm. It is found in the myofibril. In terms of biological role, paramyosin is a major structural component of many thick filaments isolated from invertebrate muscles. In Dermatophagoides farinae (American house dust mite), this protein is Paramyosin.